The primary structure comprises 340 residues: ATP synthase subunit a (340 aa).

A signal peptide spans 1 to 32 (MKRVNVIQAKAFLKVIALLVPLLLNANGPAFA). Helical transmembrane passes span 107-127 (HVVM…LVGS), 172-192 (LLTV…PYGA), 197-217 (NINV…VAAL), 236-256 (ALWI…PVAL), 269-289 (IVIL…VAVV), and 296-316 (IFIY…FTML).

Belongs to the ATPase A chain family. As to quaternary structure, F-type ATPases have 2 components, CF(1) - the catalytic core - and CF(0) - the membrane proton channel. CF(1) has five subunits: alpha(3), beta(3), gamma(1), delta(1), epsilon(1). CF(0) has four main subunits: a, b, b' and c.

The protein localises to the cell inner membrane. In terms of biological role, key component of the proton channel; it plays a direct role in the translocation of protons across the membrane. This is ATP synthase subunit a from Pelodictyon phaeoclathratiforme (strain DSM 5477 / BU-1).